The sequence spans 114 residues: MQQLIAEITKGQLKTDLPSFRPGDTLRVHVKVVEGTRERIQLFEGVVIKRRGGGISETFTVRKISYGVGVERTFPVHTPRIAKIEVLRRGKVRRAKLYYLRNLRGKKARIKEIR.

Belongs to the bacterial ribosomal protein bL19 family.

In terms of biological role, this protein is located at the 30S-50S ribosomal subunit interface and may play a role in the structure and function of the aminoacyl-tRNA binding site. The protein is Large ribosomal subunit protein bL19 of Bacillus cereus (strain AH187).